The chain runs to 439 residues: Ectonucleotide pyrophosphatase/phosphodiesterase family member 7 (439 aa).

Residues 1–21 form the signal peptide; the sequence is MGHSAVLLSVALVILPACVTG. Residues 22-422 are Extracellular-facing; sequence GPVQRQQQHK…RSGSPLSRQH (401 aa). The Zn(2+) site is built by D38 and T74. The segment at 71-77 is required for enzyme activity; the sequence is VTMTSPC. The Nucleophile role is filled by T74. Residue N95 participates in substrate binding. N-linked (GlcNAc...) asparagine glycosylation is found at N99, N120, N145, and N167. 4 residues coordinate Zn(2+): D198, H202, D245, and H246. N-linked (GlcNAc...) asparagine glycosylation occurs at N266. Position 352 (H352) interacts with Zn(2+). Residues 423 to 439 traverse the membrane as a helical segment; sequence HLVVVLMGILTGLAKVV.

It belongs to the nucleotide pyrophosphatase/phosphodiesterase family. It depends on Zn(2+) as a cofactor. Post-translationally, N-glycosylated; required for activity and transport to the plasma membrane. In terms of tissue distribution, detected in small intestine (at protein level). Highly expressed in the jejunum.

It localises to the cell membrane. The enzyme catalyses a sphingomyelin + H2O = phosphocholine + an N-acylsphing-4-enine + H(+). The catalysed reaction is a 1-O-alkyl-2-acetyl-sn-glycero-3-phosphocholine + H2O = a 1-O-alkyl-2-acetyl-sn-glycerol + phosphocholine + H(+). It catalyses the reaction 1-O-octadecyl-2-acetyl-sn-glycero-3-phosphocholine + H2O = 1-O-octadecyl-2-acetyl-sn-glycerol + phosphocholine + H(+). It carries out the reaction 1-hexadecanoyl-sn-glycero-3-phosphocholine + H2O = 1-hexadecanoyl-sn-glycerol + phosphocholine + H(+). Platelet-activating factor hydrolysis is inhibited by higher amount of sphingomyelin. The hydrolysis of platelet-activating factor and sphingomyelin can be inhibited by the presence of sphingomyelin and platelet-activating factor respectively, the inhibition of platelet-activating factor hydrolysis by sphingomyelin being stronger. PAF hydrolysis is dose-dependently increased by both taurocholate (TC) and taurodeoxycholate (TDC). Hydrolase activity against PAF is inhibited by EDTA and stimulated by 0.1-0.25 mM Zn2+. In terms of biological role, choline-specific phosphodiesterase that hydrolyzes sphingomyelin (SM) releasing the ceramide and phosphocholine and therefore is involved in sphingomyelin digestion, ceramide formation, and fatty acid (FA) absorption in the gastrointestinal tract. Also has phospholipase C activity and can also cleave phosphocholine from palmitoyl lyso-phosphatidylcholine and platelet-activating factor (PAF) leading to its inactivation. Does not have nucleotide pyrophosphatase activity. May promote cholesterol absorption by affecting the levels of sphingomyelin derived from either diet or endogenous sources, in the intestinal lumen. The protein is Ectonucleotide pyrophosphatase/phosphodiesterase family member 7 of Rattus norvegicus (Rat).